Here is a 345-residue protein sequence, read N- to C-terminus: L-threonine 3-dehydrogenase (345 aa).

Residue C42 participates in Zn(2+) binding. Residues T44 and H47 each act as charge relay system in the active site. Zn(2+) contacts are provided by H67, E68, C97, C100, C103, and C111. NAD(+)-binding positions include I179, D199, R204, 266–268 (LGI), and 290–291 (IY).

It belongs to the zinc-containing alcohol dehydrogenase family. Homotetramer. Zn(2+) serves as cofactor.

Its subcellular location is the cytoplasm. The catalysed reaction is L-threonine + NAD(+) = (2S)-2-amino-3-oxobutanoate + NADH + H(+). Its pathway is amino-acid degradation; L-threonine degradation via oxydo-reductase pathway; glycine from L-threonine: step 1/2. In terms of biological role, catalyzes the NAD(+)-dependent oxidation of L-threonine to 2-amino-3-ketobutyrate. The chain is L-threonine 3-dehydrogenase from Rhizobium rhizogenes (strain K84 / ATCC BAA-868) (Agrobacterium radiobacter).